Here is a 130-residue protein sequence, read N- to C-terminus: Ribosome biogenesis inhibitor MINAS-60 (130 aa).

Residues 61–130 (SKVQRIPTRP…RRRRPVTSSC (70 aa)) are disordered. Over residues 109-130 (KGRRRRRRMRRRRRRRPVTSSC) the composition is skewed to basic residues.

In terms of assembly, interacts with 60S ribosome assembly factors GTPBP4 and MRTO4.

The protein resides in the nucleus. It is found in the nucleolus. Functionally, acts as a late-stage inhibitor of pre-60S ribosome assembly by preventing pre-60S ribosome export from nucleus. The polypeptide is Ribosome biogenesis inhibitor MINAS-60 (Mus musculus (Mouse)).